Here is a 290-residue protein sequence, read N- to C-terminus: Protein EURL homolog (290 aa).

The interval 185–206 (SHSQAQKTEETSSGPEGTIQTQ) is disordered. The stretch at 228 to 251 (AKLQQRIQEVFEELTHQVQEKDSL) forms a coiled coil.

The protein belongs to the EURL family. In terms of assembly, interacts with CCDC85B. As to expression, expressed in brain (at protein level). Expressed in neural progenitor cells and postmitotic neurons of the embryonic cerebral cortex.

Functionally, plays a role in cortical progenitor cell proliferation and differentiation. Promotes dendritic spine development of post-migratory cortical projection neurons by modulating the beta-catenin signaling pathway. The protein is Protein EURL homolog of Mus musculus (Mouse).